We begin with the raw amino-acid sequence, 588 residues long: MRAWLLLLAVLATFQTIVRVASTEDISQRFIAAIAPVAAHIPLASASGSGSGRSGSRSVGASTSTALAKAFNPFSEPASFSDSDKSHRSKTNKKPSKSDANRQFNEVHKPRTDQLENSKNKSKQLVNKPNHNKMAVKEQRSHHKKSHHHRSHQPKQASASTESHQSSSIESIFVEEPTLVLDREVASINVPANAKAIIAEQGPSTYSKEALIKDKLKPDPSTLVEIEKSLLSLFNMKRPPKIDRSKIIIPEPMKKLYAEIMGHELDSVNIPKPGLLTKSANTVRSFTHKDSKIDDRFPHHHRFRLHFDVKSIPADEKLKAAELQLTRDALSQQVVASRSSANRTRYQVLVYDITRVGVRGQREPSYLLLDTKTVRLNSTDTVSLDVQPAVDRWLASPQRNYGLLVEVRTVRSLKPAPHHHVRLRRSADEAHERWQHKQPLLFTYTDDGRHKARSIRDVSGGEGGGKGGRNKRQPRRPTRRKNHDDTCRRHSLYVDFSDVGWDDWIVAPLGYDAYYCHGKCPFPLADHFNSTNHAVVQTLVNNMNPGKVPKACCVPTQLDSVAMLYLNDQSTVVLKNYQEMTVVGCGCR.

The signal sequence occupies residues 1-23 (MRAWLLLLAVLATFQTIVRVAST). The propeptide occupies 24-456 (EDISQRFIAA…DGRHKARSIR (433 aa)). A disordered region spans residues 74–169 (FSEPASFSDS…STESHQSSSI (96 aa)). A compositionally biased stretch (basic and acidic residues) spans 96-119 (SKSDANRQFNEVHKPRTDQLENSK). Asn-120 carries N-linked (GlcNAc...) asparagine glycosylation. Residues 140–153 (RSHHKKSHHHRSHQ) show a composition bias toward basic residues. The segment covering 156-169 (QASASTESHQSSSI) has biased composition (low complexity). N-linked (GlcNAc...) asparagine glycosylation is found at Asn-342 and Asn-377. The tract at residues 454–484 (SIRDVSGGEGGGKGGRNKRQPRRPTRRKNHD) is disordered. Over residues 468 to 481 (GRNKRQPRRPTRRK) the composition is skewed to basic residues. Disulfide bonds link Cys-487–Cys-553, Cys-516–Cys-585, and Cys-520–Cys-587. An N-linked (GlcNAc...) asparagine glycan is attached at Asn-529.

The protein belongs to the TGF-beta family. Heterodimers of scw/dpp are the active subunit, dpp/dpp homodimers elicit a basal response and scw/scw homodimers alone are ineffective in specifying a dorsal pattern. Component of a complex composed of dpp, sog and tsg. Interacts with nord and gbb; the interaction interferes with dpp secretion. Expressed in the dorsal region of the embryo, and becomes enriched in a dorsal midline stripe just prior to gastrulation. Expressed in midgut mesoderm and in two overlapping regions of the embryonic large intestine. Expressed in a long-range concentration gradient in the wing imaginal disk.

It localises to the secreted. In terms of biological role, required during oogenesis for eggshell patterning and dorsal/ventral patterning of the embryo. Acts as a morphogen during embryogenesis to pattern the dorsal/ventral axis, specifying dorsal ectoderm and amnioserosa cell fate within the dorsal half of the embryo; this activity is antagonized by binding to sog and tsg. Induces the formation of visceral mesoderm and the heart in early embryos. Required later in embryogenesis for dorsal closure and patterning of the hindgut. Also functions postembryonically as a long-range morphogen during imaginal disk development; is responsible for the progression of the morphogenetic furrow during eye development. Patterns the wing imaginal disk along its anterior/posterior axis and has a role in positioning pro-veins. Also required to subdivide the wing disk along the proximal/distal axis into body wall (notum) and wing. Ensures the correct architecture of wing epithelial cells. Has multiple roles in the developing tracheal system, controlling directed tracheal cell migration during embryogenesis and later specifying the fate of fusion cells in the tracheal branches. Required for viability of larvae. Essential for the maintenance and division of germline stem cells in the ovary. Signals via the type I receptor tkv, the type II receptor punt, and in some tissues via the type I receptor sax, in a signaling cascade that leads to activation and repression of target genes. The chain is Protein decapentaplegic (dpp) from Drosophila melanogaster (Fruit fly).